The primary structure comprises 245 residues: tRNA pseudouridine synthase A (245 aa).

Aspartate 52 serves as the catalytic Nucleophile. A substrate-binding site is contributed by tyrosine 111.

This sequence belongs to the tRNA pseudouridine synthase TruA family. Homodimer.

It carries out the reaction uridine(38/39/40) in tRNA = pseudouridine(38/39/40) in tRNA. Its function is as follows. Formation of pseudouridine at positions 38, 39 and 40 in the anticodon stem and loop of transfer RNAs. This Rickettsia prowazekii (strain Madrid E) protein is tRNA pseudouridine synthase A.